Consider the following 555-residue polypeptide: Dihydroxy-acid dehydratase (555 aa).

Asp-78 contributes to the Mg(2+) binding site. [2Fe-2S] cluster is bound at residue Cys-119. 2 residues coordinate Mg(2+): Asp-120 and Lys-121. Lys-121 bears the N6-carboxylysine mark. A [2Fe-2S] cluster-binding site is contributed by Cys-191. Glu-444 is a binding site for Mg(2+). Catalysis depends on Ser-470, which acts as the Proton acceptor.

It belongs to the IlvD/Edd family. In terms of assembly, homodimer. Requires [2Fe-2S] cluster as cofactor. Mg(2+) serves as cofactor.

It carries out the reaction (2R)-2,3-dihydroxy-3-methylbutanoate = 3-methyl-2-oxobutanoate + H2O. It catalyses the reaction (2R,3R)-2,3-dihydroxy-3-methylpentanoate = (S)-3-methyl-2-oxopentanoate + H2O. The protein operates within amino-acid biosynthesis; L-isoleucine biosynthesis; L-isoleucine from 2-oxobutanoate: step 3/4. It participates in amino-acid biosynthesis; L-valine biosynthesis; L-valine from pyruvate: step 3/4. Functions in the biosynthesis of branched-chain amino acids. Catalyzes the dehydration of (2R,3R)-2,3-dihydroxy-3-methylpentanoate (2,3-dihydroxy-3-methylvalerate) into 2-oxo-3-methylpentanoate (2-oxo-3-methylvalerate) and of (2R)-2,3-dihydroxy-3-methylbutanoate (2,3-dihydroxyisovalerate) into 2-oxo-3-methylbutanoate (2-oxoisovalerate), the penultimate precursor to L-isoleucine and L-valine, respectively. The protein is Dihydroxy-acid dehydratase of Nitratidesulfovibrio vulgaris (strain DSM 19637 / Miyazaki F) (Desulfovibrio vulgaris).